The chain runs to 293 residues: 33 kDa chaperonin (293 aa).

Cystine bridges form between C231–C233 and C264–C267.

The protein belongs to the HSP33 family. Under oxidizing conditions two disulfide bonds are formed involving the reactive cysteines. Under reducing conditions zinc is bound to the reactive cysteines and the protein is inactive.

Its subcellular location is the cytoplasm. Functionally, redox regulated molecular chaperone. Protects both thermally unfolding and oxidatively damaged proteins from irreversible aggregation. Plays an important role in the bacterial defense system toward oxidative stress. This is 33 kDa chaperonin from Yersinia pseudotuberculosis serotype O:1b (strain IP 31758).